A 321-amino-acid polypeptide reads, in one-letter code: uncharacterized protein (321 aa).

It belongs to the NAD(P)-dependent epimerase/dehydratase family.

This is an uncharacterized protein from Staphylococcus aureus (strain MRSA252).